Here is a 2437-residue protein sequence, read N- to C-terminus: Polyprotein P1234 (2437 aa).

One can recognise an Alphavirus-like MT domain in the interval 28-259 (EAQQVTPNDH…ESRRLLKSWH (232 aa)). Residues 244-263 (GSTLYIESRRLLKSWHLPSV) form a nsP1 membrane-binding region. 2 S-palmitoyl cysteine; by host lipidation sites follow: C417 and C419. The 153-residue stretch at 691-843 (DLINPPFHEF…HNICTEVDHK (153 aa)) folds into the (+)RNA virus helicase ATP-binding domain. Position 722–729 (722–729 (GVPGSGKS)) interacts with a ribonucleoside 5'-triphosphate. Residues 844-992 (SISRRCTLPI…LEDWQREHDT (149 aa)) form the (+)RNA virus helicase C-terminal domain. A Peptidase C9 domain is found at 1005 to 1327 (DVFQNKAKVC…GKLSSIYAGT (323 aa)). A nucleolus localization signal region spans residues 1006–1025 (VFQNKAKVCWAKCLVPVLET). Catalysis depends on C1014, which acts as the For cysteine protease nsP2 activity. The short motif at 1059-1068 (TKIYGVDLDS) is the Nuclear export signal element. Residue H1084 is the For cysteine protease nsP2 activity of the active site. Positions 1182–1186 (PRRKV) match the Nuclear localization signal motif. The Macro domain occupies 1335-1493 (APAYAVKRAD…QKIKTVLQNR (159 aa)). Residues D1344, N1358, G1366, G1446, I1447, and F1448 each coordinate ADP-D-ribose. The Zn(2+) site is built by C1596, C1598, C1621, and C1639. Low complexity predominate over residues 1675–1684 (TSDSSSLSTF). The disordered stretch occupies residues 1675–1729 (TSDSSSLSTFPDLESAEELDHDSQSVRPALNEPDDHQPTPTAELATHPVPPPRPN). Short sequence motifs (FGDF; binding to host G3BP1) lie at residues 1792-1795 (FGAP) and 1804-1807 (FGDF). The 116-residue stretch at 2191–2306 (DHVLETDIAS…HGVVSDKLMA (116 aa)) folds into the RdRp catalytic domain.

As to quaternary structure, interacts with non-structural protein 3. Interacts with RNA-directed RNA polymerase nsP4. Interacts with protease nsP2. interacts with itself. Interacts with mRNA-capping enzyme nsP1. Interacts with host DDX1. Interacts with host DDX3. Interacts (via C-terminus) with host G3BP1; this interaction inhibits the formation of host stress granules on viral mRNAs and the nsp3-G3BP1 complexes bind viral RNAs and probably orchestrate the assembly of viral replication complexes. Interacts (via C-terminus) with host G3BP2; this interaction inhibits the formation of host stress granules on viral mRNAs and the nsp3-G3BP2 complexes bind viral RNAs and probably orchestrate the assembly of viral replication complexes. In terms of assembly, interacts with mRNA-capping enzyme nsP1. Interacts with protease nsP2. interacts with itself. As to quaternary structure, interacts with RNA-directed RNA polymerase nsP4. Interacts with mRNA-capping enzyme nsP1. Interacts with KPNA1/karyopherin-alpha1; this interaction probably allows the active transport of protease nsP2 into the host nucleus. Interacts with host POLR2A/RPB1; this interaction seems to induce the depletion of host POLR2A and may play a role in the transcriptional shutoff induced by protease nsP2. Interacts with host GTF2E2/TF2E2; this interaction seems to induce the depletion of host GTF2E2/TF2E2 and may play a role in the transcriptional shutoff induced by protease nsP2. The cofactor is Mg(2+). It depends on Mn(2+) as a cofactor. In terms of processing, specific enzymatic cleavages in vivo yield mature proteins. The processing of the polyprotein is temporally regulated. In early stages (1.7 hpi), P1234 is first cleaved in trans through its nsP2 protease activity, releasing P123' and nsP4, which associate to form the early replication complex. At the same time, P1234 is also cut at the nsP1/nsP2 site early in infection but with lower efficiency. After replication of the viral minus-strand RNAs (4 hpi), the polyproteins are cut at the nsP1/nsP2 and nsP2/nsP3 sites very efficiently, preventing accumulation of P123' and P1234 and allowing the formation of the late replication complex. NsP3'/nsP4 site is not cleaved anymore and P34 is produced rather than nsP4. Specific enzymatic cleavages in vivo yield mature proteins. The processing of the polyprotein is temporally regulated. In early stages (1.7 hpi), P123 is cleaved at the nsP1/nsP2 site with low efficiency. After replication of the viral minus-strand RNAs (4 hpi), the polyproteins are cut at the nsP1/nsP2 and nsP2/nsP3 sites very efficiently, preventing accumulation of P123 and allowing the formation of the late replication complex. Post-translationally, specific enzymatic cleavages in vivo yield mature proteins. The processing of the polyprotein is temporally regulated. In early stages (1.7 hpi), P123' is cleaved at the nsP1/nsP2 site with low efficiency. After replication of the viral minus-strand RNAs (4 hpi), the polyproteins are cut at the nsP1/nsP2 and nsP2/nsP3 sites very efficiently, preventing accumulation of P123' and allowing the formation of the late replication complex. In terms of processing, palmitoylated by host palmitoyltransferases ZDHHC2 and ZDHHC19. Phosphorylated by host on serines and threonines. Post-translationally, ubiquitinated; targets the protein for rapid degradation via the ubiquitin system. Nsp4 is present in extremely low quantities due to low frequency of translation through the amber stop-codon and the degradation by the ubiquitin pathway.

Its subcellular location is the host cytoplasmic vesicle membrane. The protein resides in the host cell membrane. It is found in the host cell projection. It localises to the host filopodium. The protein localises to the host nucleus. Its subcellular location is the host cytoplasm. It carries out the reaction GTP + S-adenosyl-L-methionine = N(7)-methyl-GTP + S-adenosyl-L-homocysteine. It catalyses the reaction N(7)-methyl-GTP + L-histidyl-[protein] = N(tele)-(N(7)-methylguanosine 5'-phospho)-L-histidyl-[protein] + diphosphate. The enzyme catalyses N(tele)-(N(7)-methylguanosine 5'-phospho)-L-histidyl-[protein] + a 5'-end diphospho-(purine-ribonucleoside) in mRNA + H(+) = a 5'-end (N(7)-methyl 5'-triphosphoguanosine)-(purine-ribonucleoside) in mRNA + L-histidyl-[protein]. The catalysed reaction is a 5'-end triphospho-ribonucleoside in mRNA + H2O = a 5'-end diphospho-ribonucleoside in mRNA + phosphate + H(+). It carries out the reaction a ribonucleoside 5'-triphosphate + H2O = a ribonucleoside 5'-diphosphate + phosphate + H(+). It catalyses the reaction ATP + H2O = ADP + phosphate + H(+). The enzyme catalyses RNA(n) + a ribonucleoside 5'-triphosphate = RNA(n+1) + diphosphate. The catalysed reaction is RNA(n) + ATP = RNA(n)-3'-adenine ribonucleotide + diphosphate. It carries out the reaction 4-O-(ADP-D-ribosyl)-L-aspartyl-[protein] + H2O = L-aspartyl-[protein] + ADP-D-ribose + H(+). It catalyses the reaction 5-O-(ADP-D-ribosyl)-L-glutamyl-[protein] + H2O = L-glutamyl-[protein] + ADP-D-ribose + H(+). The enzyme catalyses ADP-alpha-D-ribose 1''-phosphate + H2O = ADP-D-ribose + phosphate. Functionally, inactive precursor of the viral replicase, which is activated by cleavages carried out by the viral protease nsP2. The early replication complex formed by the polyprotein P123 and nsP4 synthesizes minus-strand RNAs. As soon P123 is cleaved into mature proteins, the plus-strand RNAs synthesis begins. Its function is as follows. The early replication complex formed by the polyprotein P123' and nsP4 synthesizes minus-strand RNAs. Polyprotein P123' is a short-lived polyprotein that accumulates during early stage of infection. As soon P123' is cleaved into mature proteins, the plus-strand RNAs synthesis begins. In terms of biological role, cytoplasmic capping enzyme that catalyzes two virus-specific reactions: methyltransferase and nsP1 guanylyltransferase. mRNA-capping is necessary since all viral RNAs are synthesized in the cytoplasm, and host capping enzymes are restricted to the nucleus. The enzymatic reaction involves a covalent link between 7-methyl-GMP and nsP1, whereas eukaryotic capping enzymes form a covalent complex only with GMP. nsP1 capping consists in the following reactions: GTP is first methylated into 7-methyl-GMP and then is covalently linked to nsP1 to form the m7GMp-nsP1 complex from which 7-methyl-GMP complex is transferred to the mRNA to create the cap structure. NsP1 is needed for the initiation of the minus-strand RNAs synthesis. Probably serves as a membrane anchor for the replication complex composed of nsP1-nsP4. Palmitoylated nsP1 is remodeling host cell cytoskeleton, and induces filopodium-like structure formation at the surface of the host cell. Functionally, multifunctional protein whose N-terminus is part of the RNA polymerase complex and displays NTPase, RNA triphosphatase and helicase activities. NTPase and RNA triphosphatase are involved in viral RNA capping and helicase keeps a check on the dsRNA replication intermediates. The C-terminus harbors a protease that specifically cleaves the polyproteins and releases the mature proteins. Required for the shutoff of minus-strand RNAs synthesis. Specifically inhibits the host IFN response by promoting the nuclear export of host STAT1. Induces host transcription shutoff by inducing rapid proteasome-dependent degradation of POLR2A, a catalytic subunit of the RNAPII complex. The resulting inhibition of cellular protein synthesis serves to ensure maximal viral gene expression and to evade host immune response. Seems to be essential for minus-strand RNAs and subgenomic 26S mRNAs synthesis. Displays mono-ADP-ribosylhydrolase activity. ADP-ribosylation is a post-translational modification that controls various processes of the host cell and the virus probably needs to revert it for optimal viral replication. Binds proteins of FXR family and sequesters them into the viral RNA replication complexes thereby inhibiting the formation of host stress granules on viral mRNAs. The nsp3'-FXR complexes bind viral RNAs and probably orchestrate the assembly of viral replication complexes, thanks to the ability of FXR family members to self-assemble and bind DNA. Its function is as follows. Seems to be essential for minus-strand RNAs and subgenomic 26S mRNAs synthesis. Displays mono-ADP-ribosylhydrolase activity. ADP-ribosylation is a post-translantional modification that controls various processes of the host cell and the virus probably needs to revert it for optimal viral replication. Binds proteins of G3BP family and sequesters them into the viral RNA replication complexes thereby inhibiting the formation of host stress granules on viral mRNAs. The nsp3-G3BP complexes bind viral RNAs and probably orchestrate the assembly of viral replication complexes, thanks to the ability of G3BP family members to self-assemble and bind DNA. In terms of biological role, RNA dependent RNA polymerase. Replicates genomic and antigenomic RNA by recognizing replications specific signals. The early replication complex formed by the polyprotein P123 and nsP4 synthesizes minus-strand RNAs. The late replication complex composed of fully processed nsP1-nsP4 is responsible for the production of genomic and subgenomic plus-strand RNAs. The core catalytic domain of nsP4 also possesses terminal adenylyltransferase (TATase) activity that is probably involved in maintenance and repair of the poly(A) tail, an element required for replication of the viral genome. The protein is Polyprotein P1234 of Aedes aegypti (Yellowfever mosquito).